Consider the following 95-residue polypeptide: Aspartyl/glutamyl-tRNA(Asn/Gln) amidotransferase subunit C (95 aa).

This sequence belongs to the GatC family. In terms of assembly, heterotrimer of A, B and C subunits.

The enzyme catalyses L-glutamyl-tRNA(Gln) + L-glutamine + ATP + H2O = L-glutaminyl-tRNA(Gln) + L-glutamate + ADP + phosphate + H(+). The catalysed reaction is L-aspartyl-tRNA(Asn) + L-glutamine + ATP + H2O = L-asparaginyl-tRNA(Asn) + L-glutamate + ADP + phosphate + 2 H(+). Its function is as follows. Allows the formation of correctly charged Asn-tRNA(Asn) or Gln-tRNA(Gln) through the transamidation of misacylated Asp-tRNA(Asn) or Glu-tRNA(Gln) in organisms which lack either or both of asparaginyl-tRNA or glutaminyl-tRNA synthetases. The reaction takes place in the presence of glutamine and ATP through an activated phospho-Asp-tRNA(Asn) or phospho-Glu-tRNA(Gln). This is Aspartyl/glutamyl-tRNA(Asn/Gln) amidotransferase subunit C from Campylobacter lari (strain RM2100 / D67 / ATCC BAA-1060).